Reading from the N-terminus, the 356-residue chain is S-adenosylmethionine:tRNA ribosyltransferase-isomerase (356 aa).

The protein belongs to the QueA family. As to quaternary structure, monomer.

The protein resides in the cytoplasm. It carries out the reaction 7-aminomethyl-7-carbaguanosine(34) in tRNA + S-adenosyl-L-methionine = epoxyqueuosine(34) in tRNA + adenine + L-methionine + 2 H(+). It functions in the pathway tRNA modification; tRNA-queuosine biosynthesis. Functionally, transfers and isomerizes the ribose moiety from AdoMet to the 7-aminomethyl group of 7-deazaguanine (preQ1-tRNA) to give epoxyqueuosine (oQ-tRNA). The chain is S-adenosylmethionine:tRNA ribosyltransferase-isomerase from Escherichia coli (strain UTI89 / UPEC).